Here is a 445-residue protein sequence, read N- to C-terminus: 3-phosphoshikimate 1-carboxyvinyltransferase (445 aa).

Residues Met1 to Gly20 are compositionally biased toward polar residues. The interval Met1–Pro24 is disordered. Positions 28, 29, and 33 each coordinate 3-phosphoshikimate. Residue Lys28 participates in phosphoenolpyruvate binding. The phosphoenolpyruvate site is built by Gly101 and Arg129. 3-phosphoshikimate contacts are provided by Ser174, Gln176, Asp322, and Lys349. Gln176 is a phosphoenolpyruvate binding site. Asp322 serves as the catalytic Proton acceptor. Phosphoenolpyruvate contacts are provided by Arg353 and Arg397.

The protein belongs to the EPSP synthase family. As to quaternary structure, monomer.

It localises to the cytoplasm. The catalysed reaction is 3-phosphoshikimate + phosphoenolpyruvate = 5-O-(1-carboxyvinyl)-3-phosphoshikimate + phosphate. It functions in the pathway metabolic intermediate biosynthesis; chorismate biosynthesis; chorismate from D-erythrose 4-phosphate and phosphoenolpyruvate: step 6/7. Catalyzes the transfer of the enolpyruvyl moiety of phosphoenolpyruvate (PEP) to the 5-hydroxyl of shikimate-3-phosphate (S3P) to produce enolpyruvyl shikimate-3-phosphate and inorganic phosphate. The chain is 3-phosphoshikimate 1-carboxyvinyltransferase from Magnetococcus marinus (strain ATCC BAA-1437 / JCM 17883 / MC-1).